We begin with the raw amino-acid sequence, 103 residues long: Small ribosomal subunit protein uS10 (103 aa).

Belongs to the universal ribosomal protein uS10 family. Part of the 30S ribosomal subunit.

In terms of biological role, involved in the binding of tRNA to the ribosomes. The polypeptide is Small ribosomal subunit protein uS10 (Azotobacter vinelandii (strain DJ / ATCC BAA-1303)).